The sequence spans 108 residues: MDKSKRTFRKSKRSFRRRLPPIGSGDRIDYRNMSLISRFISEQGKILSRRVNRLTLKQQRLITIAIKQARILSSLPFLNNEKQFERTESTPRTTGTRARKKKIGLLLN.

2 stretches are compositionally biased toward basic residues: residues 1 to 19 (MDKS…RRRL) and 97 to 108 (RARKKKIGLLLN). 2 disordered regions span residues 1–23 (MDKS…PPIG) and 83–108 (QFER…LLLN).

The protein belongs to the bacterial ribosomal protein bS18 family. In terms of assembly, part of the 30S ribosomal subunit.

The protein resides in the plastid. It localises to the chloroplast. The protein is Small ribosomal subunit protein bS18c of Illicium oligandrum (Star anise).